Consider the following 341-residue polypeptide: Type II restriction enzyme BgcI specificity subunit S.BcgI (341 aa).

It belongs to the type-I restriction system S methylase family. In terms of assembly, heterotrimer of two A and one B subunit. Both subunits are necessary for DNA-binding, which is sequence non-specific. Requires Mg(2+) as cofactor.

The catalysed reaction is Endonucleolytic cleavage of DNA to give specific double-stranded fragments with terminal 5'-phosphates.. Its activity is regulated as follows. DNA restriction requires S-adenosyl-L-methionine and Mg(2+), and is inhibited by S-adenosyl-homocysteine. SAM may be a cofactor for DNA restriction. Functionally, the specificity subunit. A B, G, H and S subtype restriction enzyme that recognizes the double-stranded sequence 5'-CGAN(6)TGC-3' and cleaves bilaterally and symmetrically 10 base pairs upstream and 12 base pairs downstream of the sequence to release a 34-base pair fragment. Methylation of the recognition sequence occurs on the adenine in either one or both strands; seems to methylate restricted DNA. This subunit degrades DNA in a non-specific manner. This chain is Type II restriction enzyme BgcI specificity subunit S.BcgI, found in Heyndrickxia coagulans (Weizmannia coagulans).